Consider the following 658-residue polypeptide: Threonine--tRNA ligase (658 aa).

Residues Met1–Gln61 enclose the TGS domain. Residues Asp259 to Pro554 are catalytic. Cys353, His404, and His531 together coordinate Zn(2+).

This sequence belongs to the class-II aminoacyl-tRNA synthetase family. In terms of assembly, homodimer. Requires Zn(2+) as cofactor.

It localises to the cytoplasm. The enzyme catalyses tRNA(Thr) + L-threonine + ATP = L-threonyl-tRNA(Thr) + AMP + diphosphate + H(+). In terms of biological role, catalyzes the attachment of threonine to tRNA(Thr) in a two-step reaction: L-threonine is first activated by ATP to form Thr-AMP and then transferred to the acceptor end of tRNA(Thr). Also edits incorrectly charged L-seryl-tRNA(Thr). The polypeptide is Threonine--tRNA ligase (Streptomyces avermitilis (strain ATCC 31267 / DSM 46492 / JCM 5070 / NBRC 14893 / NCIMB 12804 / NRRL 8165 / MA-4680)).